The following is a 1173-amino-acid chain: AT-rich interactive domain-containing protein 5B (1173 aa).

Residue K130 forms a Glycyl lysine isopeptide (Lys-Gly) (interchain with G-Cter in SUMO2) linkage. Residues 249–283 form a disordered region; that stretch reads PNLKGRPRKKKPCPQRRDSFSGGKDPNNNSDGKSV. Residues 253–262 show a composition bias toward basic residues; the sequence is GRPRKKKPCP. A Phosphoserine modification is found at S267. The ARID domain maps to 322–414; it reads RADEQAFLVA…LILPYERFIK (93 aa). N6,N6-dimethyllysine is present on K340. The interval 416–607 is disordered; that stretch reads EEDKPLPPIK…QPPLANQSEV (192 aa). K449 is covalently cross-linked (Glycyl lysine isopeptide (Lys-Gly) (interchain with G-Cter in SUMO2)). Over residues 450–462 the composition is skewed to basic and acidic residues; it reads HEISKSKKEKENA. Residues K497 and K499 each participate in a glycyl lysine isopeptide (Lys-Gly) (interchain with G-Cter in SUMO2) cross-link. Residues 547–557 are compositionally biased toward low complexity; the sequence is SAPLAPTPGTG. The segment covering 593 to 605 has biased composition (polar residues); sequence GFSTTQPPLANQS. Glycyl lysine isopeptide (Lys-Gly) (interchain with G-Cter in SUMO2) cross-links involve residues K763 and K769. Disordered stretches follow at residues 777 to 802, 877 to 924, and 936 to 965; these read EPRF…VEKR, KKSA…GTSQ, and HPKA…KPHP. Basic residues predominate over residues 782–796; it reads FSKHHLSPSKKSRGR. Residues K878, K901, K905, and K920 each participate in a glycyl lysine isopeptide (Lys-Gly) (interchain with G-Cter in SUMO2) cross-link. Residues K973, K985, and K998 each participate in a glycyl lysine isopeptide (Lys-Gly) (interchain with G-Cter in SUMO2) cross-link. S1017 carries the phosphoserine modification. The interval 1017-1055 is disordered; it reads SPLDPAKEVSGKEKASEQESEGSKAAHSGHSGGTSEGHK. Residues 1021–1040 show a composition bias toward basic and acidic residues; it reads PAKEVSGKEKASEQESEGSK. Residues K1040 and K1055 each participate in a glycyl lysine isopeptide (Lys-Gly) (interchain with G-Cter in SUMO2) cross-link. Position 1118 is a phosphoserine (S1118).

The protein belongs to the ARID5B family. Post-translationally, methylation at Lys-340 prevents DNA-binding. Demethylation by PHF2 promotes recruitment of the PHF2-ARID5B complex to promoters.

It localises to the nucleus. Functionally, transcription coactivator that binds to the 5'-AATA[CT]-3' core sequence and plays a key role in adipogenesis and liver development. Acts by forming a complex with phosphorylated PHF2, which mediates demethylation at Lys-340, leading to target the PHF2-ARID5B complex to target promoters, where PHF2 mediates demethylation of dimethylated 'Lys-9' of histone H3 (H3K9me2), followed by transcription activation of target genes. The PHF2-ARID5B complex acts as a coactivator of HNF4A in liver. Required for adipogenesis: regulates triglyceride metabolism in adipocytes by regulating expression of adipogenic genes. Overexpression leads to induction of smooth muscle marker genes, suggesting that it may also act as a regulator of smooth muscle cell differentiation and proliferation. This Bos taurus (Bovine) protein is AT-rich interactive domain-containing protein 5B (ARID5B).